A 697-amino-acid polypeptide reads, in one-letter code: Serine/threonine-protein kinase tousled-like 2 (697 aa).

2 disordered regions span residues 27–136 and 289–315; these read KAPL…TAPV and LAKR…NKTN. Positions 31–44 are enriched in polar residues; the sequence is NSESSNQSLCSLGS. Residues 46 to 62 show a composition bias toward basic and acidic residues; sequence SDKELEQTPEKKQNDQR. The segment covering 111-131 has biased composition (low complexity); that stretch reads SSPQHSLSNPLPLPSQQCSPP. 2 coiled-coil regions span residues 264–293 and 334–372; these read AFQN…AKRK and FKLR…IHNE. Residues 387–666 enclose the Protein kinase domain; that stretch reads YLLLHLLGRG…VQQLACDPYL (280 aa). ATP contacts are provided by residues 393–401 and lysine 416; that span reads LGRGGFSEV. Aspartate 517 functions as the Proton acceptor in the catalytic mechanism.

This sequence belongs to the protein kinase superfamily. Ser/Thr protein kinase family. In terms of assembly, monomer. May form homodimers; homodimerization may enhance autophosphoylation and enzymatic activity. Heterodimer with TLK1. The cofactor is Mg(2+). Phosphorylated. Autophosphorylated; phosphorylation promotes the assembly of higher order oligomers and enzymatic activity.

The protein resides in the nucleus. It is found in the nucleoplasm. It localises to the cytoplasm. Its subcellular location is the perinuclear region. The protein localises to the cytoskeleton. The catalysed reaction is L-seryl-[protein] + ATP = O-phospho-L-seryl-[protein] + ADP + H(+). The enzyme catalyses L-threonyl-[protein] + ATP = O-phospho-L-threonyl-[protein] + ADP + H(+). Its function is as follows. Serine/threonine-protein kinase involved in the process of chromatin assembly and probably also DNA replication, transcription, repair, and chromosome segregation. Negative regulator of amino acid starvation-induced autophagy. This is Serine/threonine-protein kinase tousled-like 2 from Xenopus tropicalis (Western clawed frog).